We begin with the raw amino-acid sequence, 61 residues long: Large ribosomal subunit protein bL28 (61 aa).

The protein belongs to the bacterial ribosomal protein bL28 family.

The chain is Large ribosomal subunit protein bL28 (rpmB) from Geobacillus stearothermophilus (Bacillus stearothermophilus).